A 168-amino-acid polypeptide reads, in one-letter code: Peptidoglycan-associated lipoprotein (168 aa).

An N-terminal signal peptide occupies residues 1–24 (MRRIQSIARSPIAIALFMSLAVAG). The N-palmitoyl cysteine moiety is linked to residue cysteine 25. Cysteine 25 carries the S-diacylglycerol cysteine lipid modification. An OmpA-like domain is found at 51–167 (QDFTVNVGDR…RAVTVLNGAG (117 aa)).

It belongs to the Pal lipoprotein family. As to quaternary structure, the Tol-Pal system is composed of five core proteins: the inner membrane proteins TolA, TolQ and TolR, the periplasmic protein TolB and the outer membrane protein Pal. They form a network linking the inner and outer membranes and the peptidoglycan layer. The N-terminus is blocked.

The protein resides in the cell outer membrane. Its function is as follows. Part of the Tol-Pal system, which plays a role in outer membrane invagination during cell division and is important for maintaining outer membrane integrity. The polypeptide is Peptidoglycan-associated lipoprotein (Brucella abortus biovar 1 (strain 9-941)).